The following is a 518-amino-acid chain: T-box transcription factor TBX5 (518 aa).

Residues 1–46 (MADADEGFGLAHTPLEPDAKDLPCDSKPESALGAPSKSPSSPQAAF) form a disordered region. The segment covering 15–28 (LEPDAKDLPCDSKP) has biased composition (basic and acidic residues). Over residues 34-45 (APSKSPSSPQAA) the composition is skewed to low complexity. A DNA-binding region (T-box) is located at residues 58-238 (LHERELWLKF…NNPFAKGFRG (181 aa)). Residues 250–356 (MQSKEYPVVP…PSEEDSFYRS (107 aa)) form a disordered region. Residues 262–301 (TVRQKVASNHSPFSSESRALSTSSNLGSQYQCENGVSGPS) show a composition bias toward polar residues. Residue K339 is modified to N6-acetyllysine.

Monomer. Homodimer (via the T-box); binds DNA as homodimer. Interacts (via the T-box) with NKX2-5 (via the homeobox); this complex binds DNA. Interacts with GATA4. Interacts with KAT2A and KAT2B. Post-translationally, acetylation at Lys-339 by KAT2A and KAT2B promotes nuclear retention.

It is found in the nucleus. It localises to the cytoplasm. Its function is as follows. DNA-binding protein that regulates the transcription of several genes and is involved in heart development and limb pattern formation. Binds to the core DNA motif of NPPA promoter. This is T-box transcription factor TBX5 (TBX5) from Homo sapiens (Human).